Here is a 286-residue protein sequence, read N- to C-terminus: Phosphatidylglycerol--prolipoprotein diacylglyceryl transferase (286 aa).

Helical transmembrane passes span 25–45, 65–85, 103–123, and 127–147; these read WYAL…RMLL, FILW…VLFY, GGMS…LFGW, and VPIL…LFLG. Arg148 is an a 1,2-diacyl-sn-glycero-3-phospho-(1'-sn-glycerol) binding site. The next 3 helical transmembrane spans lie at 188–208, 212–232, and 248–268; these read AGLE…AGAL, GLII…GEFF, and MGML…ITTW.

This sequence belongs to the Lgt family.

The protein resides in the cell inner membrane. The enzyme catalyses L-cysteinyl-[prolipoprotein] + a 1,2-diacyl-sn-glycero-3-phospho-(1'-sn-glycerol) = an S-1,2-diacyl-sn-glyceryl-L-cysteinyl-[prolipoprotein] + sn-glycerol 1-phosphate + H(+). The protein operates within protein modification; lipoprotein biosynthesis (diacylglyceryl transfer). Its function is as follows. Catalyzes the transfer of the diacylglyceryl group from phosphatidylglycerol to the sulfhydryl group of the N-terminal cysteine of a prolipoprotein, the first step in the formation of mature lipoproteins. This is Phosphatidylglycerol--prolipoprotein diacylglyceryl transferase from Rhodopseudomonas palustris (strain ATCC BAA-98 / CGA009).